The following is a 497-amino-acid chain: Probable FAD-binding monooxygenase AlmA (497 aa).

The chain crosses the membrane as a helical span at residues 4–24 (QVDVLIIGAGISGIGLAVHLS). Positions 15, 36, 56, 62, and 104 each coordinate FAD. NADP(+) is bound at residue 54–56 (RSD). NADP(+)-binding positions include 184–190 (SGATAIT), 208–209 (RS), and 292–293 (RL). Residue valine 395 coordinates FAD.

Belongs to the FAD-binding monooxygenase family. FAD is required as a cofactor.

Its subcellular location is the cell membrane. It functions in the pathway hydrocarbon metabolism; alkane degradation. Is involved in the degradation of n-alkanes with C chain lengths of 32 and longer. Allows Acinetobacter sp. strain DSM 17874 to grow on long-chain n-alkanes such as dotriacontane (C32H66) or hexatriacontane (C36H74) as a sole carbon source. This chain is Probable FAD-binding monooxygenase AlmA, found in Acinetobacter sp.